The chain runs to 49 residues: Sperm protamine P1 (49 aa).

It belongs to the protamine P1 family. As to expression, testis.

It localises to the nucleus. Its subcellular location is the chromosome. In terms of biological role, protamines substitute for histones in the chromatin of sperm during the haploid phase of spermatogenesis. They compact sperm DNA into a highly condensed, stable and inactive complex. This Rhinopoma hardwickii (Lesser mouse-tailed bat) protein is Sperm protamine P1 (PRM1).